A 452-amino-acid chain; its full sequence is Phosphoglucosamine mutase (452 aa).

Ser-104 acts as the Phosphoserine intermediate in catalysis. Mg(2+) contacts are provided by Ser-104, Asp-246, Asp-248, and Asp-250. Ser-104 carries the phosphoserine modification.

It belongs to the phosphohexose mutase family. Mg(2+) is required as a cofactor. In terms of processing, activated by phosphorylation.

It carries out the reaction alpha-D-glucosamine 1-phosphate = D-glucosamine 6-phosphate. Its function is as follows. Catalyzes the conversion of glucosamine-6-phosphate to glucosamine-1-phosphate. The polypeptide is Phosphoglucosamine mutase (Streptomyces coelicolor (strain ATCC BAA-471 / A3(2) / M145)).